The following is a 129-amino-acid chain: Protein RALF-like 34 (129 aa).

The signal sequence occupies residues 1–23; sequence MAASSLNLLLILSLLTFISLQRS. A propeptide spans 24-76 (removed in mature form); it reads ESLSDNPSLTLLPDGFDWPISHSDEFDIIDGEESFEVTEEDDGVTDRRSLYWR. Intrachain disulfides connect C94/C107 and C121/C127.

The protein belongs to the plant rapid alkalinization factor (RALF) family. Post-translationally, proteolytically cleaved, probably by S1P, a subtilisin-like serine protease (subtilase). In terms of tissue distribution, expressed in roots, stems and leaves.

Its subcellular location is the secreted. Functionally, cell signaling peptide that may regulate plant stress, growth, and development. Mediates a rapid alkalinization of extracellular space by mediating a transient increase in the cytoplasmic Ca(2+) concentration leading to a calcium-dependent signaling events through a cell surface receptor and a concomitant activation of some intracellular mitogen-activated protein kinases. In Arabidopsis thaliana (Mouse-ear cress), this protein is Protein RALF-like 34 (RALFL34).